Consider the following 56-residue polypeptide: Small ribosomal subunit protein uS14 (56 aa).

Positions 21, 24, 39, and 42 each coordinate Zn(2+).

Belongs to the universal ribosomal protein uS14 family. In terms of assembly, component of the 40S small ribosomal subunit. Zn(2+) serves as cofactor.

It localises to the cytoplasm. Its subcellular location is the cytosol. The protein resides in the rough endoplasmic reticulum. The chain is Small ribosomal subunit protein uS14 (RpS29) from Spodoptera frugiperda (Fall armyworm).